We begin with the raw amino-acid sequence, 504 residues long: Maturase K (504 aa).

The protein belongs to the intron maturase 2 family. MatK subfamily.

Its subcellular location is the plastid. It localises to the chloroplast. Functionally, usually encoded in the trnK tRNA gene intron. Probably assists in splicing its own and other chloroplast group II introns. This is Maturase K from Fagus crenata (Japanese beech).